The primary structure comprises 82 residues: UPF0180 protein BALH_1248 (82 aa).

Belongs to the UPF0180 family.

The polypeptide is UPF0180 protein BALH_1248 (Bacillus thuringiensis (strain Al Hakam)).